The following is a 187-amino-acid chain: UPF0301 protein KPK_0728 (187 aa).

It belongs to the UPF0301 (AlgH) family.

This chain is UPF0301 protein KPK_0728, found in Klebsiella pneumoniae (strain 342).